A 167-amino-acid polypeptide reads, in one-letter code: Periplasmic nitrate reductase, electron transfer subunit (167 aa).

The first 34 residues, 1–34, serve as a signal peptide directing secretion; it reads MRRAHRAGERVMMKRFGIALLAVAIAAGASSLTA. A disordered region spans residues 40 to 65; that stretch reads GLHGPAPLNDEGPAPPMLPNRNTSER. 8 residues coordinate heme c: His79, Cys93, Cys96, His97, His114, Cys133, Cys136, and His137.

This sequence belongs to the NapB family. As to quaternary structure, component of the periplasmic nitrate reductase NapAB complex composed of NapA and NapB. In terms of processing, binds 2 heme C groups per subunit.

It is found in the periplasm. Functionally, electron transfer subunit of the periplasmic nitrate reductase complex NapAB. Receives electrons from the membrane-anchored tetraheme c-type NapC protein and transfers these to NapA subunit, thus allowing electron flow between membrane and periplasm. Essential for periplasmic nitrate reduction with nitrate as the terminal electron acceptor. In Bradyrhizobium japonicum, this protein is Periplasmic nitrate reductase, electron transfer subunit.